The sequence spans 209 residues: Uracil phosphoribosyltransferase (209 aa).

5-phospho-alpha-D-ribose 1-diphosphate is bound by residues arginine 79, arginine 104, and 131–139 (DPMLATGGS). Residues isoleucine 194 and 199-201 (GDA) each bind uracil. Aspartate 200 provides a ligand contact to 5-phospho-alpha-D-ribose 1-diphosphate.

This sequence belongs to the UPRTase family. The cofactor is Mg(2+).

The catalysed reaction is UMP + diphosphate = 5-phospho-alpha-D-ribose 1-diphosphate + uracil. Its pathway is pyrimidine metabolism; UMP biosynthesis via salvage pathway; UMP from uracil: step 1/1. Its activity is regulated as follows. Allosterically activated by GTP. Catalyzes the conversion of uracil and 5-phospho-alpha-D-ribose 1-diphosphate (PRPP) to UMP and diphosphate. The protein is Uracil phosphoribosyltransferase of Chromohalobacter salexigens (strain ATCC BAA-138 / DSM 3043 / CIP 106854 / NCIMB 13768 / 1H11).